Reading from the N-terminus, the 336-residue chain is N-acetyl-gamma-glutamyl-phosphate reductase (336 aa).

The active site involves cysteine 156.

The protein belongs to the NAGSA dehydrogenase family. Type 1 subfamily.

It localises to the cytoplasm. It catalyses the reaction N-acetyl-L-glutamate 5-semialdehyde + phosphate + NADP(+) = N-acetyl-L-glutamyl 5-phosphate + NADPH + H(+). It participates in amino-acid biosynthesis; L-arginine biosynthesis; N(2)-acetyl-L-ornithine from L-glutamate: step 3/4. In terms of biological role, catalyzes the NADPH-dependent reduction of N-acetyl-5-glutamyl phosphate to yield N-acetyl-L-glutamate 5-semialdehyde. The protein is N-acetyl-gamma-glutamyl-phosphate reductase of Moritella profunda.